The chain runs to 846 residues: cGMP-dependent protein kinase (846 aa).

The tract at residues 1 to 22 (MRCNERNKKKAIFSNDDFSGED) is autoinhibitory segment. CNMP-binding domain regions lie at residues 51 to 166 (VCST…FIDS), 169 to 268 (VFDM…IVLG), 288 to 391 (IFRQ…LGDN), and 411 to 510 (IFRY…LQII). Residues lysine 106, glycine 115, glutamate 116, alanine 118, arginine 125, and serine 126 each coordinate 3',5'-cyclic GMP. Residues arginine 466, glycine 475, glutamate 476, alanine 478, arginine 485, and threonine 486 each contribute to the 3',5'-cyclic GMP site. In terms of domain architecture, Protein kinase spans 534-791 (LETERIIGRG…FKDIKEHAFF (258 aa)). ATP is bound by residues 540–548 (IGRGTFGTV) and lysine 563. The Proton acceptor role is filled by aspartate 657. The region spanning 792–846 (GNFNWDKLAGRLLEPPLVSKGETYAEDIDIKQIEEEDALNEGEPLDGDDSWDVDF) is the AGC-kinase C-terminal domain. The disordered stretch occupies residues 824–846 (IEEEDALNEGEPLDGDDSWDVDF). Residues 825–846 (EEEDALNEGEPLDGDDSWDVDF) show a composition bias toward acidic residues.

The protein belongs to the protein kinase superfamily. AGC Ser/Thr protein kinase family. cGMP subfamily. Monomer. Requires Mg(2+) as cofactor. Autophosphorylated.

It is found in the cytoplasm. The protein resides in the endoplasmic reticulum membrane. It carries out the reaction L-seryl-[protein] + ATP = O-phospho-L-seryl-[protein] + ADP + H(+). The catalysed reaction is L-threonyl-[protein] + ATP = O-phospho-L-threonyl-[protein] + ADP + H(+). With respect to regulation, activated by cGMP. Not activated by cAMP. cGMP binding allosterically triggers a conformational change at the alpha C-helix of cGMP-binding domain 4, which bridges the regulatory and catalytic domains, causing the capping triad, composed of Arg-477, Gln-525 and Asp-526, to form and stabilize the active conformation. The cGMP-binding domains acts cooperatively to activate PKG. In terms of biological role, serine/threonine protein kinase which acts as a downstream effector of the second messenger cGMP. Controls the release of Ca(2+) from intracellular stores by regulating phosphoinositide biosynthesis. Ca(2+) signals are essential for merozoite and sporozoite invasion and egress from host hepatocytes and erythrocytes, and, in the mosquito vector, for gametocyte activation, and ookinete and sporozoite motility. During the host liver stage, regulates the initial invasion of host hepatocytes by sporozoites by regulating sporozoite motility and microneme exocytosis. Following parasite development in the hepatocytes, required for the release of merosomes, a vesicle containing the mature merozoites. During the asexual blood stage, required for the progression from schizont to the ring stage following merozoite invasion of host erythrocytes and for merozoite egress. Regulates merozoite egress by promoting the release of exonemes and micronemes which contain proteins essential for egress. Phosphorylates CDPK1 predominantly at the late schizont stage; phosphorylation at 'Ser-64' regulates CDPK1 protein-protein interaction and phosphorylation at 'Thr-231' may regulate CDPK1 kinase activity. In the mosquito vector, required for the initiation of gametogenesis induced by xanthurenic acid, specifically the gametocyte differentiation from the crescent-shaped form to the spherical form. Required for the gliding motility of ookinetes to reach and penetrate the midgut epithelium by promoting Ca(2+)-mediated activation of CDPK1 and CDPK4. Also required for microneme secretion in ookinete by promoting Ca(2+)-mediated activation of CDPK3. The sequence is that of cGMP-dependent protein kinase from Plasmodium vivax (strain Salvador I).